Reading from the N-terminus, the 253-residue chain is tRNA pseudouridine synthase A (253 aa).

The active-site Nucleophile is the Asp-53. Residue Tyr-112 participates in substrate binding.

The protein belongs to the tRNA pseudouridine synthase TruA family. Homodimer.

It carries out the reaction uridine(38/39/40) in tRNA = pseudouridine(38/39/40) in tRNA. Formation of pseudouridine at positions 38, 39 and 40 in the anticodon stem and loop of transfer RNAs. This Lactococcus lactis subsp. lactis (strain IL1403) (Streptococcus lactis) protein is tRNA pseudouridine synthase A.